The sequence spans 456 residues: Cobyrinate a,c-diamide synthase (456 aa).

One can recognise a GATase cobBQ-type domain in the interval 247–439 (PIAIARDRAF…LHLHFGGKPW (193 aa)). Catalysis depends on Cys-330, which acts as the Nucleophile.

It belongs to the CobB/CbiA family. It depends on Mg(2+) as a cofactor.

The catalysed reaction is cob(II)yrinate + 2 L-glutamine + 2 ATP + 2 H2O = cob(II)yrinate a,c diamide + 2 L-glutamate + 2 ADP + 2 phosphate + 2 H(+). It participates in cofactor biosynthesis; adenosylcobalamin biosynthesis; cob(II)yrinate a,c-diamide from sirohydrochlorin (anaerobic route): step 10/10. In terms of biological role, catalyzes the ATP-dependent amidation of the two carboxylate groups at positions a and c of cobyrinate, using either L-glutamine or ammonia as the nitrogen source. This is Cobyrinate a,c-diamide synthase from Synechococcus sp. (strain ATCC 27144 / PCC 6301 / SAUG 1402/1) (Anacystis nidulans).